A 123-amino-acid polypeptide reads, in one-letter code: Putative iron-sulfur cluster insertion protein ErpA (123 aa).

Residues Cys51, Cys115, and Cys117 each coordinate iron-sulfur cluster.

The protein belongs to the HesB/IscA family. Homodimer. Iron-sulfur cluster is required as a cofactor.

In terms of biological role, required for insertion of 4Fe-4S clusters. The polypeptide is Putative iron-sulfur cluster insertion protein ErpA (Burkholderia cenocepacia (strain HI2424)).